A 328-amino-acid chain; its full sequence is MAAGIVASRRLRDLLTRRLTGSNYPGLSISLRLTGSSAQEEASGVALGEAPDHSYESLRVTSAQKHVLHVQLNRPNKRNAMNKVFWREMVECFNKISRDADCRAVVISGAGKMFTAGIDLMDMASDILQPKGDDVARISWYLRDIITRYQETFNVIERCPKPVIAAVHGGCIGGGVDLVTACDIRYCAQDAFFQVKEVDVGLAADVGTLQRLPKVIGNQSLVNELAFTARKMMADEALGSGLVSRVFPDKEVMLDAALALAAEISSKSPVAVQSTKVNLLYSRDHSVAESLNYVASWNMSMLQTQDLVKSVQATTENKELKTVTFSKL.

Residues 1–33 (MAAGIVASRRLRDLLTRRLTGSNYPGLSISLRL) constitute a mitochondrion transit peptide. Residues 116 to 120 (AGIDL) and Gly-174 each bind substrate. Lys-231 is subject to N6-succinyllysine. Ser-268 carries the post-translational modification Phosphoserine. Positions 326–328 (SKL) match the Microbody targeting signal motif. Lys-327 is subject to N6-acetyllysine.

It belongs to the enoyl-CoA hydratase/isomerase family. Homohexamer.

It is found in the mitochondrion. Its subcellular location is the peroxisome. It catalyses the reaction (3E,5Z)-octadienoyl-CoA = (2E,4E)-octadienoyl-CoA. The enzyme catalyses (3E,5Z,8Z,11Z,14Z)-eicosapentaenoyl-CoA = (2E,4E,8Z,11Z,14Z)-eicosapentaenoyl-CoA. It functions in the pathway lipid metabolism; fatty acid beta-oxidation. Its function is as follows. Isomerization of 3-trans,5-cis-dienoyl-CoA to 2-trans,4-trans-dienoyl-CoA. This chain is Delta(3,5)-Delta(2,4)-dienoyl-CoA isomerase, mitochondrial, found in Homo sapiens (Human).